Reading from the N-terminus, the 533-residue chain is Tyrosine/DOPA decarboxylase 3 (533 aa).

N6-(pyridoxal phosphate)lysine is present on Lys-319.

This sequence belongs to the group II decarboxylase family. Homodimer. Requires pyridoxal 5'-phosphate as cofactor. Roots.

The enzyme catalyses L-tyrosine + H(+) = tyramine + CO2. It catalyses the reaction L-dopa + H(+) = dopamine + CO2. The catalysed reaction is 5-hydroxy-L-tryptophan + H(+) = serotonin + CO2. Functionally, marginally higher substrate specificity for L-DOPA over L-tyrosine. This is Tyrosine/DOPA decarboxylase 3 (TYDC3) from Papaver somniferum (Opium poppy).